A 183-amino-acid chain; its full sequence is Cyanate hydratase (183 aa).

Catalysis depends on residues R118, E121, and S144.

This sequence belongs to the cyanase family.

It carries out the reaction cyanate + hydrogencarbonate + 3 H(+) = NH4(+) + 2 CO2. In terms of biological role, catalyzes the reaction of cyanate with bicarbonate to produce ammonia and carbon dioxide. In Cryptococcus neoformans var. neoformans serotype D (strain B-3501A) (Filobasidiella neoformans), this protein is Cyanate hydratase.